Consider the following 160-residue polypeptide: MSILKKPDLNDPELRAKLAKGMGHNYYGEPAWPNDLLYIFPVVILGSIACCGGLAVLDPALIGEPADPFSTPLEILPEWYFFPVFQILRVIPNKLLGVVLMAAVPAGLIAVPFIENVNKFQNPFRRPVASAVFLFGTFVAIWLGIGATFPIDKSLTLGLF.

The next 3 membrane-spanning stretches (helical) occupy residues 36–56, 95–115, and 131–151; these read LLYIFPVVILGSIACCGGLAV, LLGVVLMAAVPAGLIAVPFIE, and AVFLFGTFVAIWLGIGATFPI.

The protein belongs to the cytochrome b family. PetD subfamily. The 4 large subunits of the cytochrome b6-f complex are cytochrome b6, subunit IV (17 kDa polypeptide, petD), cytochrome f and the Rieske protein, while the 4 small subunits are petG, petL, petM and petN. The complex functions as a dimer.

It is found in the plastid. It localises to the cyanelle thylakoid membrane. In terms of biological role, component of the cytochrome b6-f complex, which mediates electron transfer between photosystem II (PSII) and photosystem I (PSI), cyclic electron flow around PSI, and state transitions. The chain is Cytochrome b6-f complex subunit 4 from Cyanophora paradoxa.